Reading from the N-terminus, the 415-residue chain is Alpha-2Db adrenergic receptor (415 aa).

The Extracellular segment spans residues Met-1–Ser-33. 2 N-linked (GlcNAc...) asparagine glycosylation sites follow: Asn-12 and Asn-18. A helical transmembrane segment spans residues Val-34–Val-58. The Cytoplasmic segment spans residues Phe-59–Leu-70. A helical membrane pass occupies residues Phe-71–Met-96. The Extracellular segment spans residues Gly-97–Cys-106. A disulfide bridge links Cys-106 with Cys-179. The helical transmembrane segment at Ala-107–Leu-129 threads the bilayer. Residues Asp-130–Ile-150 lie on the Cytoplasmic side of the membrane. Residues Lys-151–Lys-173 form a helical membrane-spanning segment. The Extracellular segment spans residues His-174–Glu-184. Residue Asn-183 is glycosylated (N-linked (GlcNAc...) asparagine). A helical membrane pass occupies residues Thr-185–Cys-208. Residues Arg-209–Val-339 are Cytoplasmic-facing. Residues Gln-234–Asn-299 are disordered. Over residues Asn-276–Ser-286 the composition is skewed to basic residues. The chain crosses the membrane as a helical span at residues Leu-340 to Ile-363. The Extracellular segment spans residues Cys-364–Asn-376. The chain crosses the membrane as a helical span at residues Leu-377–Asn-397. The Cytoplasmic segment spans residues Arg-398–Thr-415.

This sequence belongs to the G-protein coupled receptor 1 family. Adrenergic receptor subfamily. ADRA2D sub-subfamily.

The protein localises to the cell membrane. Its function is as follows. Alpha-2 adrenergic receptors mediate the catecholamine-induced inhibition of adenylate cyclase through the action of G proteins. The order of potency for this receptor is dexmedetomidine &gt; norepinephrine = epinephrine &gt; oxymetazoline. The chain is Alpha-2Db adrenergic receptor (adra2db) from Danio rerio (Zebrafish).